A 497-amino-acid chain; its full sequence is tRNA-2-methylthio-N(6)-dimethylallyladenosine synthase (497 aa).

Residues 1-50 are disordered; the sequence is MTGTSNIPTHGKEHKDAPALLPLPAPNPHHTHAAHPGDPSHDRPPSRGKL. The MTTase N-terminal domain maps to 48–165; sequence GKLFIKTHGC…LPDMIRARRE (118 aa). Residues Cys-57, Cys-94, Cys-128, Cys-202, Cys-206, and Cys-209 each coordinate [4Fe-4S] cluster. Positions 188 to 430 constitute a Radical SAM core domain; the sequence is RAEGPSAFVS…QKHINAYAAD (243 aa). One can recognise a TRAM domain in the interval 433–496; that stretch reads KRMIGTVQTV…TNSLRGRVHT (64 aa).

Belongs to the methylthiotransferase family. MiaB subfamily. In terms of assembly, monomer. [4Fe-4S] cluster serves as cofactor.

It localises to the cytoplasm. It catalyses the reaction N(6)-dimethylallyladenosine(37) in tRNA + (sulfur carrier)-SH + AH2 + 2 S-adenosyl-L-methionine = 2-methylsulfanyl-N(6)-dimethylallyladenosine(37) in tRNA + (sulfur carrier)-H + 5'-deoxyadenosine + L-methionine + A + S-adenosyl-L-homocysteine + 2 H(+). Its function is as follows. Catalyzes the methylthiolation of N6-(dimethylallyl)adenosine (i(6)A), leading to the formation of 2-methylthio-N6-(dimethylallyl)adenosine (ms(2)i(6)A) at position 37 in tRNAs that read codons beginning with uridine. The polypeptide is tRNA-2-methylthio-N(6)-dimethylallyladenosine synthase (Xylella fastidiosa (strain M12)).